Reading from the N-terminus, the 330-residue chain is Fructose-1,6-bisphosphatase class 1 (330 aa).

The Mg(2+) site is built by Glu-84, Asp-103, Leu-105, and Asp-106. Substrate contacts are provided by residues 106-109 (DGSS), Asn-196, and Lys-262. Glu-268 serves as a coordination point for Mg(2+).

This sequence belongs to the FBPase class 1 family. In terms of assembly, homotetramer. The cofactor is Mg(2+).

The protein resides in the cytoplasm. It carries out the reaction beta-D-fructose 1,6-bisphosphate + H2O = beta-D-fructose 6-phosphate + phosphate. Its pathway is carbohydrate biosynthesis; gluconeogenesis. In Shewanella sp. (strain MR-7), this protein is Fructose-1,6-bisphosphatase class 1.